The primary structure comprises 252 residues: ATP synthase subunit a (252 aa).

Helical transmembrane passes span 29 to 49 (FTNV…FLFI), 87 to 107 (FFPL…IGLF), 117 to 137 (IMIT…YGFY), 146 to 166 (LFVP…IEII), 196 to 216 (FIVS…LPLI), and 219 to 239 (VAIT…FTVL).

Belongs to the ATPase A chain family. As to quaternary structure, F-type ATPases have 2 components, CF(1) - the catalytic core - and CF(0) - the membrane proton channel. CF(1) has five subunits: alpha(3), beta(3), gamma(1), delta(1), epsilon(1). CF(0) has three main subunits: a(1), b(2) and c(9-12). The alpha and beta chains form an alternating ring which encloses part of the gamma chain. CF(1) is attached to CF(0) by a central stalk formed by the gamma and epsilon chains, while a peripheral stalk is formed by the delta and b chains.

It is found in the cell inner membrane. Functionally, key component of the proton channel; it plays a direct role in the translocation of protons across the membrane. The polypeptide is ATP synthase subunit a (Bartonella tribocorum (strain CIP 105476 / IBS 506)).